Reading from the N-terminus, the 310-residue chain is 2-ketogluconate reductase (310 aa).

NADP(+) is bound by residues 151 to 152 (HI) and 227 to 229 (IAR). Catalysis depends on residues arginine 229 and glutamate 258. Residue histidine 276 is the Proton donor of the active site.

This sequence belongs to the D-isomer specific 2-hydroxyacid dehydrogenase family. Homohexamer.

The catalysed reaction is D-gluconate + NADP(+) = 2-dehydro-D-gluconate + NADPH + H(+). In terms of biological role, catalyzes the reduction of 2-keto-D-gluconate to gluconate. Can also catalyze the reduction of 2-keto-L-gulonate. Can use both NADH and NADPH efficiently, with a slight preference for NADPH. The sequence is that of 2-ketogluconate reductase from Gluconobacter oxydans (strain 621H) (Gluconobacter suboxydans).